Here is a 237-residue protein sequence, read N- to C-terminus: Mitochondrial inner membrane protease atp23 (237 aa).

His-136 contacts a divalent metal cation. The active site involves Glu-137. His-140 serves as a coordination point for a divalent metal cation.

The protein belongs to the peptidase M76 family.

The protein resides in the mitochondrion inner membrane. Has a dual role in the assembly of mitochondrial ATPase. Acts as a protease that removes N-terminal residues of mitochondrial ATPase CF(0) subunit 6 at the intermembrane space side. Also involved in the correct assembly of the membrane-embedded ATPase CF(0) particle, probably mediating association of subunit 6 with the subunit 9 ring. The chain is Mitochondrial inner membrane protease atp23 (atp23) from Aspergillus clavatus (strain ATCC 1007 / CBS 513.65 / DSM 816 / NCTC 3887 / NRRL 1 / QM 1276 / 107).